A 162-amino-acid polypeptide reads, in one-letter code: Interleukin-15 (162 aa).

A signal peptide spans 1–29 (MRILKPYLRSTSIQCYLCLLLNSHFLTEA). The propeptide occupies 30 to 48 (GIHVFILGCISASLPKTEA). Cystine bridges form between cysteine 83-cysteine 133 and cysteine 90-cysteine 136. N-linked (GlcNAc...) asparagine glycosylation is found at asparagine 104, asparagine 113, asparagine 121, and asparagine 127.

The protein belongs to the IL-15/IL-21 family.

The protein resides in the secreted. Cytokine that plays a major role in the development of inflammatory and protective immune responses to microbial invaders and parasites by modulating immune cells of both the innate and adaptive immune systems. Stimulates the proliferation of natural killer cells, T-cells and B-cells and promotes the secretion of several cytokines. In monocytes, induces the production of IL8 and monocyte chemotactic protein 1/CCL2, two chemokines that attract neutrophils and monocytes respectively to sites of infection. Unlike most cytokines, which are secreted in soluble form, IL15 is expressed in association with its high affinity IL15RA on the surface of IL15-producing cells and delivers signals to target cells that express IL2RB and IL2RG receptor subunits. Binding to its receptor triggers the phosphorylation of JAK1 and JAK3 and the recruitment and subsequent phosphorylation of signal transducer and activator of transcription-3/STAT3 and STAT5. In mast cells, induces the rapid tyrosine phosphorylation of STAT6 and thereby controls mast cell survival and release of cytokines such as IL4. The chain is Interleukin-15 (IL15) from Bos taurus (Bovine).